A 1128-amino-acid chain; its full sequence is MAAVRTASLLCGLLALLALCPEGSPQTVLTDDEIQEFLEGFLSEFETQSPPREDDVEAQPLPEPTQRARKSKAGGKPRADAEAPPEKNKDKEKKGKKDKGPKAAKHLEGSTRPTKKPKEKPPKATKKPKEKPPKATKKPKEKPPKATKKPKEKPPKATKRPSAGKRFSTVAPLETPERSLTSPSNPGTRELPEERGRTSLNTWQGQGEETQVEARQHRPEPEEETEMPTLDYNDQIEREDYEDFEYIRRQKQPRPTPSRKRIWPEPPEEKTQEPEERKEVDPPLKPLLPPDYGDGYLIPNYDDLDYYFPHPPPQKPDVGQEVDEEKEELKKPKKEGSSPKEDTEDKWAAEKNKDHKAGPRKGEELEEEWGPVEKIKCPPIGMESHRIEDNQIRASSMLRHGLGAQRGRLNMQAGANEDDYYDGAWCAEDESQTQWIEVDTRRTTRFTGVITQGRDSSIHDDFVTTFFVGFSNDSQTWVMYTNGYEEMTFHGNVDKDTPVLSELPEPVVARFIRIYPLTWNGSLCMRLEVLGCPVTPVYSYYAQNEVVTTDSLDFRHHSYKDMRQLMKVVNEECPTITRTYSLGKSSRGLKIYAMEISDNPGEHELGEPEFRYTAGMHGNEVLGRELLLLLMQYLCHEYRDGNPRVRNLVQDTRIHLVPSLNPDGYEVAAQMGSEFGNWALGLWTEEGFDIFEDFPDLNSVLWAAEEKKWVPYRVPNNNLPIPERYLSPDATVSTEVRAIISWMEKNPFVLGANLNGGERLVSYPYDMARTPSQEQLLAAALAAARGEDEDEVSEAQETPDHAIFRWLAISFASAHLTMTEPYRGGCQAQDYTSGMGIVNGAKWNPRSGTFNDFSYLHTNCLELSIYLGCDKFPHESELPREWENNKEALLTFMEQVHRGIKGVVTDEQGIPIANATISVSGINHGVKTASGGDYWRILNPGEYRVTAHAEGYTSSAKICNVDYDIGATQCNFILARSNWKRIREILAMNGNRPILRVDPSRPMTPQQRRLQQRRLRYRLRMREQMRLRRLNSTTGPATSPTPALTLPPSPTPGSTSRLWEILPTTAAGWEESETETYTEVVTEFETEYGPDLEVEELEEEEEEEEEMDTGLTFPVTTVETYTVNFGDF.

Residues 1-25 (MAAVRTASLLCGLLALLALCPEGSP) form the signal peptide. The disordered stretch occupies residues 40–368 (GFLSEFETQS…PRKGEELEEE (329 aa)). Positions 77 to 109 (PRADAEAPPEKNKDKEKKGKKDKGPKAAKHLEG) are enriched in basic and acidic residues. The span at 113-163 (PTKKPKEKPPKATKKPKEKPPKATKKPKEKPPKATKKPKEKPPKATKRPSA) shows a compositional bias: basic residues. Polar residues-rich tracts occupy residues 178 to 187 (RSLTSPSNPG) and 198 to 209 (TSLNTWQGQGEE). The span at 249 to 261 (RQKQPRPTPSRKR) shows a compositional bias: basic residues. Composition is skewed to basic and acidic residues over residues 267 to 282 (PEEK…EVDP) and 327 to 363 (EELK…RKGE). The region spanning 375 to 532 (IKCPPIGMES…LCMRLEVLGC (158 aa)) is the F5/8 type C domain. Positions 382 to 547 (MESHRIEDNQ…YSYYAQNEVV (166 aa)) are required for DNA-binding and interaction with NFKBIA. Interaction with MAPK1 and MAPK3 regions lie at residues 413-616 (AGAN…TAGM) and 998-1128 (DPSR…FGDF). A glycan (N-linked (GlcNAc...) asparagine) is linked at N520. Residues 547–977 (VTTDSLDFRH…TQCNFILARS (431 aa)) are interaction with PTEN. One can recognise a Peptidase M14 domain in the interval 555 to 896 (RHHSYKDMRQ…EALLTFMEQV (342 aa)). Residues 933-1128 (DYWRILNPGE…ETYTVNFGDF (196 aa)) form a required for transcriptional repression region. The interval 1027–1056 (LRRLNSTTGPATSPTPALTLPPSPTPGSTS) is disordered. The segment covering 1030–1044 (LNSTTGPATSPTPAL) has biased composition (low complexity).

It belongs to the peptidase M14 family. In terms of assembly, interacts with different types of collagen, including collagens I, III, and V. Interacts with GNG5, NFKBIA, MAPK1, MAPK3 and PTEN. May interact with calmodulin. Interaction with MAPK1 may stimulate DNA-binding. Binds to DNA in vitro. Post-translationally, phosphorylated by MAPK1 in vitro. In terms of tissue distribution, expressed in aorta.

It localises to the secreted. In terms of biological role, as a positive regulator of collagen fibrillogenesis, it is probably involved in the organization and remodeling of the extracellular matrix. May positively regulate MAP-kinase activity in adipocytes, leading to enhanced adipocyte proliferation and reduced adipocyte differentiation. May also positively regulate NF-kappa-B activity in macrophages by promoting the phosphorylation and subsequent degradation of I-kappa-B-alpha (NFKBIA), leading to enhanced macrophage inflammatory responsiveness. Can act as a transcriptional repressor. In Rattus norvegicus (Rat), this protein is Adipocyte enhancer-binding protein 1 (Aebp1).